Reading from the N-terminus, the 249-residue chain is DNA polymerase sliding clamp (249 aa).

The protein belongs to the PCNA family. As to quaternary structure, homotrimer. The subunits circularize to form a toroid; DNA passes through its center. Replication factor C (RFC) is required to load the toroid on the DNA.

Functionally, sliding clamp subunit that acts as a moving platform for DNA processing. Responsible for tethering the catalytic subunit of DNA polymerase and other proteins to DNA during high-speed replication. This Thermococcus onnurineus (strain NA1) protein is DNA polymerase sliding clamp.